The chain runs to 109 residues: Nucleoid-associated protein PM0205 (109 aa).

Belongs to the YbaB/EbfC family. In terms of assembly, homodimer.

The protein resides in the cytoplasm. The protein localises to the nucleoid. Binds to DNA and alters its conformation. May be involved in regulation of gene expression, nucleoid organization and DNA protection. This is Nucleoid-associated protein PM0205 from Pasteurella multocida (strain Pm70).